The primary structure comprises 287 residues: Glycine--tRNA ligase alpha subunit (287 aa).

This sequence belongs to the class-II aminoacyl-tRNA synthetase family. As to quaternary structure, tetramer of two alpha and two beta subunits.

The protein localises to the cytoplasm. It catalyses the reaction tRNA(Gly) + glycine + ATP = glycyl-tRNA(Gly) + AMP + diphosphate. The polypeptide is Glycine--tRNA ligase alpha subunit (Campylobacter jejuni subsp. jejuni serotype O:6 (strain 81116 / NCTC 11828)).